The chain runs to 67 residues: Teratocyte protein CftICK-II (67 aa).

Residues 1-25 (MVKSLLFAIGYLIFLLVTRVNVINA) form the signal peptide. Disulfide bonds link Cys-28-Cys-42, Cys-35-Cys-46, and Cys-41-Cys-57.

Abundantly expressed by teratocytes, which are extra-embryonic cells released by parasitoid wasps into their hosts during larval eclosion.

Its subcellular location is the secreted. In terms of biological role, this endoparasitoid wasp peptide has immununosuppressive, antimicrobial and insecticidal activities. Suppress cellular immunity which is detectable as a reduction of hemocyte encapsulation in the host. Shows moderate antifungal activity against C.albicans (MIC=4 ug/ml). In vivo, ingestion of this peptide (probably at excessive doses) increases larval mortality and reduces leaf consumption of D.saccharalis, a permissive host for C.flavipes. This chain is Teratocyte protein CftICK-II, found in Cotesia flavipes (Parasitic wasp).